Consider the following 1005-residue polypeptide: Translation initiation factor IF-2 (1005 aa).

Disordered regions lie at residues 54 to 337 (KYVP…RRPQ) and 368 to 414 (PKPK…PTSV). Positions 58–73 (SPSTHSMPPTRPTSHS) are enriched in polar residues. The segment covering 75–86 (PLPPQPGKPQPK) has biased composition (pro residues). The segment covering 146–157 (GSNSPSHSESTP) has biased composition (polar residues). Low complexity-rich tracts occupy residues 189-198 (PSPAAMAGRA) and 222-240 (VESA…PRAE). Positions 258 to 274 (PRSETSEDGARRGEKLV) are enriched in basic and acidic residues. Positions 392–401 (GGRKLSRRDR) are enriched in basic residues. The region spanning 495-668 (RRPPVVTIMG…LLVSEVEDLY (174 aa)) is the tr-type G domain. Residues 504-511 (GHVDHGKT) form a G1 region. 504 to 511 (GHVDHGKT) is a GTP binding site. The tract at residues 529–533 (GITQH) is G2. Residues 554–557 (DTPG) are G3. Residues 554–558 (DTPGH) and 608–611 (NKID) contribute to the GTP site. The tract at residues 608-611 (NKID) is G4. Residues 644-646 (SAI) form a G5 region.

This sequence belongs to the TRAFAC class translation factor GTPase superfamily. Classic translation factor GTPase family. IF-2 subfamily.

Its subcellular location is the cytoplasm. Its function is as follows. One of the essential components for the initiation of protein synthesis. Protects formylmethionyl-tRNA from spontaneous hydrolysis and promotes its binding to the 30S ribosomal subunits. Also involved in the hydrolysis of GTP during the formation of the 70S ribosomal complex. The sequence is that of Translation initiation factor IF-2 from Cyanothece sp. (strain PCC 7425 / ATCC 29141).